Consider the following 665-residue polypeptide: Probable potassium transport system protein Kup (665 aa).

Transmembrane regions (helical) follow at residues 15–35 (SFLI…LYVM), 48–68 (ITPD…TLLT), 100–120 (WLII…MLTP), 147–167 (IIII…HFGT), 173–193 (IFGP…IVNL), 219–239 (LGFF…ALYS), 251–271 (LTWP…AAWI), 292–312 (MMPS…AIIA), 348–368 (IYMP…VLYF), 378–398 (YGLS…NYLL), 403–423 (PLPI…SFLI), and 431–451 (KGGF…YIWI).

This sequence belongs to the HAK/KUP transporter (TC 2.A.72) family.

It is found in the cell membrane. The enzyme catalyses K(+)(in) + H(+)(in) = K(+)(out) + H(+)(out). In terms of biological role, transport of potassium into the cell. Likely operates as a K(+):H(+) symporter. The chain is Probable potassium transport system protein Kup from Clostridium perfringens (strain ATCC 13124 / DSM 756 / JCM 1290 / NCIMB 6125 / NCTC 8237 / Type A).